Reading from the N-terminus, the 853-residue chain is MSTIENFDAHTPMMQQYLKLKAQHPEILLFYRMGDFYELFYDDAKRASQLLDISLTKRGASAGEPIPMAGIPYHAVENYLAKLVNQGESVAICEQIGDPATSKGPVERKVVRIVTPGTISDEALLQERQDNLLAAIWQDSKGFGYATLDISSGRFRLSEPADRETMAAELQRTNPAELLYAEDFAEMSLIEGRRGLRRRPLWEFEIDTARQQLNLQFGTRDLVGFGVENAPRGLCAAGCLLQYAKDTQRTTLPHIRSITMERQQDSIIMDAATRRNLEITQNLAGGAENTLASVLDCTVTPMGSRMLKRWLHMPVRDTRVLLERQQTIGALQDFTAELQPVLRQVGDLERILARLALRTARPRDLARMRHAFQQLPELRAQLENVDSAPVQALREKMGEFAELRDLLERAIIDTPPVLVRDGGVIASGYNEELDEWRALADGATDYLERLEVRERERTGLDTLKVGFNAVHGYYIQISRGQSHLAPINYMRRQTLKNAERYIIPELKEYEDKVLTSKGKALALEKQLYEELFDLLLPHLEALQQSASALAELDVLVNLAERAYTLNYTCPTFIDKPGIRITEGRHPVVEQVLNEPFIANPLNLSPQRRMLIITGPNMGGKSTYMRQTALIALMAYIGSYVPAQKVEIGPIDRIFTRVGAADDLASGRSTFMVEMTETANILHNATEYSLVLMDEIGRGTSTYDGLSLAWACAENLANKIKALTLFATHYFELTQLPEKMEGVANVHLDALEHGDTIAFMHSVQDGAASKSYGLAVAALAGVPKEVIKRARQKLRELESISPNAAATQVDGTQMSLLSVPEETSPAVEALENLDPDSLTPRQALEWIYRLKSLV.

Residue 614-621 participates in ATP binding; sequence GPNMGGKS.

This sequence belongs to the DNA mismatch repair MutS family.

Its function is as follows. This protein is involved in the repair of mismatches in DNA. It is possible that it carries out the mismatch recognition step. This protein has a weak ATPase activity. The chain is DNA mismatch repair protein MutS from Escherichia coli O6:H1 (strain CFT073 / ATCC 700928 / UPEC).